The chain runs to 567 residues: Proline--tRNA ligase (567 aa).

This sequence belongs to the class-II aminoacyl-tRNA synthetase family. ProS type 1 subfamily. As to quaternary structure, homodimer.

It localises to the cytoplasm. The catalysed reaction is tRNA(Pro) + L-proline + ATP = L-prolyl-tRNA(Pro) + AMP + diphosphate. Its function is as follows. Catalyzes the attachment of proline to tRNA(Pro) in a two-step reaction: proline is first activated by ATP to form Pro-AMP and then transferred to the acceptor end of tRNA(Pro). As ProRS can inadvertently accommodate and process non-cognate amino acids such as alanine and cysteine, to avoid such errors it has two additional distinct editing activities against alanine. One activity is designated as 'pretransfer' editing and involves the tRNA(Pro)-independent hydrolysis of activated Ala-AMP. The other activity is designated 'posttransfer' editing and involves deacylation of mischarged Ala-tRNA(Pro). The misacylated Cys-tRNA(Pro) is not edited by ProRS. This chain is Proline--tRNA ligase, found in Fusobacterium nucleatum subsp. nucleatum (strain ATCC 25586 / DSM 15643 / BCRC 10681 / CIP 101130 / JCM 8532 / KCTC 2640 / LMG 13131 / VPI 4355).